A 122-amino-acid polypeptide reads, in one-letter code: MIQQETRLNVADNSGAKQVQCIRVLGGTKKRYASVGDRIVVSVKSASPAGNIKKGAVSKAVVVRTKKEVRRKDGSYIRFDDNAAVLLQNNDELRGTRISGPVARELREKEFMKVVSLAPEVL.

Belongs to the universal ribosomal protein uL14 family. As to quaternary structure, part of the 50S ribosomal subunit. Forms a cluster with proteins L3 and L19. In the 70S ribosome, L14 and L19 interact and together make contacts with the 16S rRNA in bridges B5 and B8.

Functionally, binds to 23S rRNA. Forms part of two intersubunit bridges in the 70S ribosome. This Amoebophilus asiaticus (strain 5a2) protein is Large ribosomal subunit protein uL14.